Here is a 178-residue protein sequence, read N- to C-terminus: MNKISKVVLVFIVILTIVILIKQSHEVKVAALFIQFENETTEPEVEAILENYDIPVNYTIDCNSNISRGKYYIKADEDKINELRKDENWTSVVELKKGNYNIIMLSAEFVPDENFLTVLEKNNLQLKKAVVCYIHFGNGSPDRVVGKNCVLEKDAIRIKNELEKNEKVLIVGLDYIQG.

It belongs to the UPF0228 family.

The protein is UPF0228 protein MM_0401 of Methanosarcina mazei (strain ATCC BAA-159 / DSM 3647 / Goe1 / Go1 / JCM 11833 / OCM 88) (Methanosarcina frisia).